Reading from the N-terminus, the 426-residue chain is Enolase (426 aa).

A (2R)-2-phosphoglycerate-binding site is contributed by Gln163. Glu205 serves as the catalytic Proton donor. 3 residues coordinate Mg(2+): Asp242, Glu283, and Asp310. The (2R)-2-phosphoglycerate site is built by Lys335, Arg364, Ser365, and Lys386. Lys335 (proton acceptor) is an active-site residue.

This sequence belongs to the enolase family. Mg(2+) is required as a cofactor.

The protein resides in the cytoplasm. The protein localises to the secreted. It localises to the cell surface. The catalysed reaction is (2R)-2-phosphoglycerate = phosphoenolpyruvate + H2O. It functions in the pathway carbohydrate degradation; glycolysis; pyruvate from D-glyceraldehyde 3-phosphate: step 4/5. Its function is as follows. Catalyzes the reversible conversion of 2-phosphoglycerate (2-PG) into phosphoenolpyruvate (PEP). It is essential for the degradation of carbohydrates via glycolysis. This chain is Enolase, found in Arthrobacter sp. (strain FB24).